The primary structure comprises 203 residues: ATP-dependent Clp protease proteolytic subunit (203 aa).

Ser-100 functions as the Nucleophile in the catalytic mechanism. Residue His-125 is part of the active site.

The protein belongs to the peptidase S14 family. As to quaternary structure, fourteen ClpP subunits assemble into 2 heptameric rings which stack back to back to give a disk-like structure with a central cavity, resembling the structure of eukaryotic proteasomes.

It is found in the cytoplasm. It catalyses the reaction Hydrolysis of proteins to small peptides in the presence of ATP and magnesium. alpha-casein is the usual test substrate. In the absence of ATP, only oligopeptides shorter than five residues are hydrolyzed (such as succinyl-Leu-Tyr-|-NHMec, and Leu-Tyr-Leu-|-Tyr-Trp, in which cleavage of the -Tyr-|-Leu- and -Tyr-|-Trp bonds also occurs).. In terms of biological role, cleaves peptides in various proteins in a process that requires ATP hydrolysis. Has a chymotrypsin-like activity. Plays a major role in the degradation of misfolded proteins. The sequence is that of ATP-dependent Clp protease proteolytic subunit from Anaeromyxobacter dehalogenans (strain 2CP-1 / ATCC BAA-258).